The sequence spans 526 residues: AAA ATPase forming ring-shaped complexes (526 aa).

Residues 1 to 18 (MGDMASSTDPAAHNSFSD) show a composition bias toward polar residues. A disordered region spans residues 1–20 (MGDMASSTDPAAHNSFSDFN). Residues 20 to 59 (NREEMTRLADNVRSLQRTNQDLSARNTKLAEMLKSSRDKL) adopt a coiled-coil conformation. 257–262 (GCGKTL) serves as a coordination point for ATP.

This sequence belongs to the AAA ATPase family. Homohexamer. Assembles into a hexameric ring structure.

The protein is AAA ATPase forming ring-shaped complexes of Corynebacterium efficiens (strain DSM 44549 / YS-314 / AJ 12310 / JCM 11189 / NBRC 100395).